Here is a 133-residue protein sequence, read N- to C-terminus: MMLNSDTMELDLPPTHSETESGFSDCGGGPGPDGAGSGDPGVVQVRSSELGESGRKDLQHLSREERRRRRRATAKYRTAHATRERIRVEAFNLAFAELRKLLPTLPPDKKLSKIEILRLAICYISYLNHVLDV.

The tract at residues 1–78 (MMLNSDTMEL…RRRATAKYRT (78 aa)) is disordered. Gly residues predominate over residues 25-39 (DCGGGPGPDGAGSGD). The segment covering 52-65 (ESGRKDLQHLSREE) has biased composition (basic and acidic residues). A compositionally biased stretch (basic residues) spans 66–78 (RRRRRRATAKYRT). The 53-residue stretch at 75–127 (KYRTAHATRERIRVEAFNLAFAELRKLLPTLPPDKKLSKIEILRLAICYISYL) folds into the bHLH domain.

In terms of assembly, efficient DNA binding requires dimerization with another bHLH protein.

Its subcellular location is the nucleus. In terms of biological role, may serve as DNA-binding protein and may be involved in the control of cell-type determination, possibly within the developing nervous system. In Mus musculus (Mouse), this protein is Helix-loop-helix protein 1 (Nhlh1).